Reading from the N-terminus, the 856-residue chain is DNA mismatch repair protein MutS (856 aa).

Residue 618–625 (GPNMGGKS) coordinates ATP.

It belongs to the DNA mismatch repair MutS family.

Its function is as follows. This protein is involved in the repair of mismatches in DNA. It is possible that it carries out the mismatch recognition step. This protein has a weak ATPase activity. The protein is DNA mismatch repair protein MutS of Shewanella baltica (strain OS185).